A 252-amino-acid polypeptide reads, in one-letter code: Aspartate/glutamate leucyltransferase (252 aa).

This sequence belongs to the R-transferase family. Bpt subfamily.

The protein localises to the cytoplasm. The enzyme catalyses N-terminal L-glutamyl-[protein] + L-leucyl-tRNA(Leu) = N-terminal L-leucyl-L-glutamyl-[protein] + tRNA(Leu) + H(+). It catalyses the reaction N-terminal L-aspartyl-[protein] + L-leucyl-tRNA(Leu) = N-terminal L-leucyl-L-aspartyl-[protein] + tRNA(Leu) + H(+). Functions in the N-end rule pathway of protein degradation where it conjugates Leu from its aminoacyl-tRNA to the N-termini of proteins containing an N-terminal aspartate or glutamate. This chain is Aspartate/glutamate leucyltransferase, found in Hyphomonas neptunium (strain ATCC 15444).